The primary structure comprises 310 residues: Ribose-phosphate pyrophosphokinase (310 aa).

ATP contacts are provided by residues 34–36 (DGE) and 93–94 (RQ). Residues H127 and D167 each contribute to the Mg(2+) site. K190 is a catalytic residue. Residues R192, D216, and 220-224 (DSGGT) contribute to the D-ribose 5-phosphate site.

It belongs to the ribose-phosphate pyrophosphokinase family. Class I subfamily. Homohexamer. It depends on Mg(2+) as a cofactor.

It is found in the cytoplasm. It catalyses the reaction D-ribose 5-phosphate + ATP = 5-phospho-alpha-D-ribose 1-diphosphate + AMP + H(+). Its pathway is metabolic intermediate biosynthesis; 5-phospho-alpha-D-ribose 1-diphosphate biosynthesis; 5-phospho-alpha-D-ribose 1-diphosphate from D-ribose 5-phosphate (route I): step 1/1. Involved in the biosynthesis of the central metabolite phospho-alpha-D-ribosyl-1-pyrophosphate (PRPP) via the transfer of pyrophosphoryl group from ATP to 1-hydroxyl of ribose-5-phosphate (Rib-5-P). The protein is Ribose-phosphate pyrophosphokinase of Maricaulis maris (strain MCS10) (Caulobacter maris).